Consider the following 426-residue polypeptide: UDP-N-acetylglucosamine 1-carboxyvinyltransferase (426 aa).

Residue 22–23 participates in phosphoenolpyruvate binding; sequence KN. Arginine 94 is a UDP-N-acetyl-alpha-D-glucosamine binding site. Cysteine 118 serves as the catalytic Proton donor. A 2-(S-cysteinyl)pyruvic acid O-phosphothioketal modification is found at cysteine 118. Residues 123–127, aspartate 310, and isoleucine 332 each bind UDP-N-acetyl-alpha-D-glucosamine; that span reads RPVDL.

This sequence belongs to the EPSP synthase family. MurA subfamily.

Its subcellular location is the cytoplasm. The enzyme catalyses phosphoenolpyruvate + UDP-N-acetyl-alpha-D-glucosamine = UDP-N-acetyl-3-O-(1-carboxyvinyl)-alpha-D-glucosamine + phosphate. It participates in cell wall biogenesis; peptidoglycan biosynthesis. In terms of biological role, cell wall formation. Adds enolpyruvyl to UDP-N-acetylglucosamine. The polypeptide is UDP-N-acetylglucosamine 1-carboxyvinyltransferase (Hyphomonas neptunium (strain ATCC 15444)).